A 232-amino-acid polypeptide reads, in one-letter code: Homeobox protein SAX-1 (232 aa).

Disordered stretches follow at residues 1-64 (CLPD…SCAK), 122-150 (KQHPGADGAAAPAPPAAARCSPSPPRPAA), and 185-208 (LLGARVPRASTPRTSENPPRLCPS). The homeobox DNA-binding region spans 65 to 124 (PRRARTAFTYEQLVALENKFRATRYLSVCERLNLALSLSLTETQVKIWFQNRRTKWKKQH). Low complexity predominate over residues 126-142 (GADGAAAPAPPAAARCS).

It belongs to the NK-1 homeobox family. In terms of tissue distribution, transiently expressed in the birth zone of the whole spinal cord regardless of the axial level.

The protein resides in the nucleus. The sequence is that of Homeobox protein SAX-1 (SAX1) from Gallus gallus (Chicken).